Consider the following 122-residue polypeptide: Large ribosomal subunit protein uL14 (122 aa).

Belongs to the universal ribosomal protein uL14 family. As to quaternary structure, part of the 50S ribosomal subunit. Forms a cluster with proteins L3 and L19. In the 70S ribosome, L14 and L19 interact and together make contacts with the 16S rRNA in bridges B5 and B8.

Its function is as follows. Binds to 23S rRNA. Forms part of two intersubunit bridges in the 70S ribosome. The chain is Large ribosomal subunit protein uL14 from Oenococcus oeni (strain ATCC BAA-331 / PSU-1).